The sequence spans 256 residues: MFKKLIKRNKTKISHNDDLDLHNLPEHVAIIMDGNGRWAKKRKMPRIKGHYEGMQTIKTVTREASDLGIKYLTLYAFSTENWSRPENEVNYIMNLPVNFLKTFLPELIEKNVQIETIGFLDAVPKSTIEAIEHAKEKTKNNTGLKLIFAINYGGRAEIVQSMKSIYDELQRNGQDSKDIDESMINKHLMTHSYPDPELLIRTSGEQRISNFLIWQSSYSEFIFNEKLWPDFDGEEFKNCLKIYQSRQRRFGGLSKE.

The active site involves D33. D33 contacts Mg(2+). Substrate is bound by residues 34–37 (GNGR), W38, R46, H50, and 78–80 (STE). N81 serves as the catalytic Proton acceptor. Residues W82, R84, R201, and 207–209 (RIS) each bind substrate. E220 is a binding site for Mg(2+).

The protein belongs to the UPP synthase family. In terms of assembly, homodimer. Mg(2+) serves as cofactor.

Functionally, catalyzes the condensation of isopentenyl diphosphate (IPP) with allylic pyrophosphates generating different type of terpenoids. In Staphylococcus haemolyticus (strain JCSC1435), this protein is Isoprenyl transferase.